A 558-amino-acid polypeptide reads, in one-letter code: Dihydroxy-acid dehydratase (558 aa).

Position 81 (D81) interacts with Mg(2+). Residue C122 participates in [2Fe-2S] cluster binding. Mg(2+) is bound by residues D123 and K124. K124 is subject to N6-carboxylysine. A [2Fe-2S] cluster-binding site is contributed by C195. Residue E447 participates in Mg(2+) binding. The Proton acceptor role is filled by S473.

This sequence belongs to the IlvD/Edd family. In terms of assembly, homodimer. The cofactor is [2Fe-2S] cluster. Requires Mg(2+) as cofactor.

It catalyses the reaction (2R)-2,3-dihydroxy-3-methylbutanoate = 3-methyl-2-oxobutanoate + H2O. It carries out the reaction (2R,3R)-2,3-dihydroxy-3-methylpentanoate = (S)-3-methyl-2-oxopentanoate + H2O. It participates in amino-acid biosynthesis; L-isoleucine biosynthesis; L-isoleucine from 2-oxobutanoate: step 3/4. It functions in the pathway amino-acid biosynthesis; L-valine biosynthesis; L-valine from pyruvate: step 3/4. Functionally, functions in the biosynthesis of branched-chain amino acids. Catalyzes the dehydration of (2R,3R)-2,3-dihydroxy-3-methylpentanoate (2,3-dihydroxy-3-methylvalerate) into 2-oxo-3-methylpentanoate (2-oxo-3-methylvalerate) and of (2R)-2,3-dihydroxy-3-methylbutanoate (2,3-dihydroxyisovalerate) into 2-oxo-3-methylbutanoate (2-oxoisovalerate), the penultimate precursor to L-isoleucine and L-valine, respectively. This chain is Dihydroxy-acid dehydratase, found in Bacillus pumilus (strain SAFR-032).